Here is a 470-residue protein sequence, read N- to C-terminus: tRNA modification GTPase MnmE (470 aa).

(6S)-5-formyl-5,6,7,8-tetrahydrofolate is bound by residues Lys-27, Glu-90, and Arg-129. The 161-residue stretch at Gly-231–Leu-391 folds into the TrmE-type G domain. GTP contacts are provided by residues Asn-241–Ser-246, Thr-260–Thr-266, and Asp-285–Gly-288. Mg(2+) is bound by residues Ser-245 and Thr-266. Residue Lys-470 participates in (6S)-5-formyl-5,6,7,8-tetrahydrofolate binding.

It belongs to the TRAFAC class TrmE-Era-EngA-EngB-Septin-like GTPase superfamily. TrmE GTPase family. In terms of assembly, homodimer. Heterotetramer of two MnmE and two MnmG subunits. K(+) is required as a cofactor.

The protein resides in the cytoplasm. Exhibits a very high intrinsic GTPase hydrolysis rate. Involved in the addition of a carboxymethylaminomethyl (cmnm) group at the wobble position (U34) of certain tRNAs, forming tRNA-cmnm(5)s(2)U34. This Syntrophobacter fumaroxidans (strain DSM 10017 / MPOB) protein is tRNA modification GTPase MnmE.